Here is a 395-residue protein sequence, read N- to C-terminus: Probable inactive serine/threonine-protein kinase DDB_G0293746 (395 aa).

In terms of domain architecture, Protein kinase spans 9 to 395; sequence YSEIDLISDN…ITQFIIDYLF (387 aa). Residues 15–23 and K54 each bind ATP; that span reads ISDNPFKNY. Residues 213-266 form a disordered region; sequence NSSLSSLSSSTSSSSSSSSSTNCNNNTTENNNNNYNNNNNNNNNNNNNNNNNSL.

The protein belongs to the protein kinase superfamily. Ser/Thr protein kinase family.

The polypeptide is Probable inactive serine/threonine-protein kinase DDB_G0293746 (Dictyostelium discoideum (Social amoeba)).